A 300-amino-acid chain; its full sequence is Free fatty acid receptor 1 (300 aa).

Topologically, residues 1 to 8 (MDLPPQLS) are extracellular. The chain crosses the membrane as a helical span at residues 9 to 31 (FALYVAAFALGFPLNVLAIRGAR). At 32–41 (AHARRRLTPS) the chain is on the cytoplasmic side. A helical transmembrane segment spans residues 42 to 64 (LVYALNLGCSDLLLTVSLPLKAV). Topologically, residues 65–79 (EALASGAWPLPASLC) are extracellular. A disulfide bridge links C79 with C170. A helical membrane pass occupies residues 80-101 (PVFGVAHFAPLYAGGGFLAALS). Residues 102–121 (AGRYLGAAFPLGYQAFRRPC) lie on the Cytoplasmic side of the membrane. Residues 122-142 (YSWGVCAAIWALVLCHLGLVF) traverse the membrane as a helical segment. Residues 143–178 (VLEAPGGWLDHSNTSLGINTPVNGSPVCLEAWDPAS) are Extracellular-facing. A glycan (N-linked (GlcNAc...) asparagine) is linked at N155. The helical transmembrane segment at 179-200 (AGPARFSLSLLLFFLPLAITAF) threads the bilayer. Over 201–223 (CYVGCLRALAHSGLTHRRKLRAA) the chain is Cytoplasmic. A helical transmembrane segment spans residues 224 to 248 (WVAGGALLTLLLCVGPYNASNVASF). Residues 249–256 (LNPNLGGS) are Extracellular-facing. Residues 257–279 (WRKLGLITGAWSVVLNPLVTGYL) traverse the membrane as a helical segment. Topologically, residues 280–300 (GRGPGLKTVCAARTQGSTSQK) are cytoplasmic.

The protein belongs to the G-protein coupled receptor 1 family.

Its subcellular location is the cell membrane. Functionally, G-protein coupled receptor for medium and long chain saturated and unsaturated fatty acids that plays an important role in glucose homeostasis. Fatty acid binding increases glucose-stimulated insulin secretion, and may also enhance the secretion of glucagon-like peptide 1 (GLP-1). May also play a role in bone homeostasis; receptor signaling activates pathways that inhibit osteoclast differentiation. Ligand binding leads to a conformation change that triggers signaling via G-proteins that activate phospholipase C, leading to an increase of the intracellular calcium concentration. Seems to act through a G(q) and G(i)-mediated pathway. Mediates the anti-inflammatory effects of omega-3 polyunsaturated fatty acids (PUFAs) via inhibition of NLRP3 inflammasome activation. The polypeptide is Free fatty acid receptor 1 (FFAR1) (Macaca fascicularis (Crab-eating macaque)).